A 105-amino-acid chain; its full sequence is Hydrogen cyanide synthase subunit HcnA (105 aa).

Residues 16–97 (ADMTISLNGQ…GMQVQTLSNR (82 aa)) form the 2Fe-2S ferredoxin-type domain. 4 residues coordinate [2Fe-2S] cluster: C60, C65, C68, and C81.

In terms of assembly, heterotrimer of HcnA, HcnB and HcnC.

The protein resides in the cell membrane. The enzyme catalyses glycine + 2 A = hydrogen cyanide + 2 AH2 + CO2. Its function is as follows. A three-component membrane-bound flavoenzyme that catalyzes the formation of hydrogen cyanide, a secondary metabolite, by transfer of electrons to a cyanide-resistant branch of the aerobic respiratory chain. Contributes to suppression of black root rot of tobacco. The polypeptide is Hydrogen cyanide synthase subunit HcnA (Pseudomonas protegens (strain DSM 19095 / LMG 27888 / CFBP 6595 / CHA0)).